The primary structure comprises 555 residues: Probable apyrase 6 (555 aa).

Over residues 1-10 (MRRSHARSRV) the composition is skewed to basic residues. The interval 1–45 (MRRSHARSRVKNSSSSKSDMDPIKFQIRSGNRAPSSSSTYTLTKP) is disordered. Residues 1-55 (MRRSHARSRVKNSSSSKSDMDPIKFQIRSGNRAPSSSSTYTLTKPNSKHAKSNLL) are Cytoplasmic-facing. A compositionally biased stretch (polar residues) spans 28-45 (RSGNRAPSSSSTYTLTKP). A helical membrane pass occupies residues 56 to 76 (LTVGSISVVLGVLFLCYSILF). Residues 77–512 (SGGNLRGSLR…HALFSNHPKT (436 aa)) lie on the Extracellular side of the membrane. 89 to 99 (VVIDGGSTGTR) is a binding site for ATP. Catalysis depends on Glu-212, which acts as the Proton acceptor. An ATP-binding site is contributed by 236 to 246 (GIVELGGASAQ). N-linked (GlcNAc...) asparagine glycosylation is found at Asn-267 and Asn-348. Residues 513-533 (LHYLIGIPILMTVLVYLVTKW) form a helical membrane-spanning segment. At 534-555 (RKPQLKTIYDLEKGRYIVTRIR) the chain is on the cytoplasmic side.

Belongs to the GDA1/CD39 NTPase family. Ca(2+) serves as cofactor. As to expression, detected in mature pollen grains (at the protein level). Also expressed in the veins and hydathode regions of rosette leaves.

The protein resides in the cytoplasmic vesicle membrane. The catalysed reaction is a ribonucleoside 5'-triphosphate + 2 H2O = a ribonucleoside 5'-phosphate + 2 phosphate + 2 H(+). In terms of biological role, catalyzes the hydrolysis of phosphoanhydride bonds of nucleoside tri- and di-phosphates. Involved in the regulation of pollen and anther development. The chain is Probable apyrase 6 (APY6) from Arabidopsis thaliana (Mouse-ear cress).